A 132-amino-acid chain; its full sequence is Small ribosomal subunit protein uS19 (132 aa).

This sequence belongs to the universal ribosomal protein uS19 family.

In terms of biological role, protein S19 forms a complex with S13 that binds strongly to the 16S ribosomal RNA. The protein is Small ribosomal subunit protein uS19 (rps19) of Pyrococcus horikoshii (strain ATCC 700860 / DSM 12428 / JCM 9974 / NBRC 100139 / OT-3).